The chain runs to 280 residues: Large ribosomal subunit protein uL2 (280 aa).

2 disordered regions span residues 29-58 (PEKS…GGGH) and 225-280 (VMNP…NKKR). Basic residues predominate over residues 45-58 (SHGHITTRHRGGGH). Residues 253 to 269 (KEGRTRKPKRYSDDMIV) show a composition bias toward basic and acidic residues. Residues 270–280 (RRRRANKNKKR) are compositionally biased toward basic residues.

The protein belongs to the universal ribosomal protein uL2 family. In terms of assembly, part of the 50S ribosomal subunit. Forms a bridge to the 30S subunit in the 70S ribosome.

Functionally, one of the primary rRNA binding proteins. Required for association of the 30S and 50S subunits to form the 70S ribosome, for tRNA binding and peptide bond formation. It has been suggested to have peptidyltransferase activity; this is somewhat controversial. Makes several contacts with the 16S rRNA in the 70S ribosome. This Corynebacterium glutamicum (strain R) protein is Large ribosomal subunit protein uL2.